We begin with the raw amino-acid sequence, 316 residues long: L-lactate dehydrogenase 3 (316 aa).

Residues valine 16, aspartate 37, arginine 42, and tyrosine 68 each contribute to the NAD(+) site. A substrate-binding site is contributed by arginine 91. NAD(+)-binding positions include serine 104, 121–123 (ASN), and threonine 146. 123–126 (NPVD) serves as a coordination point for substrate. A substrate-binding site is contributed by 151-154 (DSSR). 2 residues coordinate beta-D-fructose 1,6-bisphosphate: arginine 156 and histidine 171. The Proton acceptor role is filled by histidine 178. Substrate is bound at residue threonine 233.

It belongs to the LDH/MDH superfamily. LDH family. As to quaternary structure, homotetramer.

It localises to the cytoplasm. The enzyme catalyses (S)-lactate + NAD(+) = pyruvate + NADH + H(+). It participates in fermentation; pyruvate fermentation to lactate; (S)-lactate from pyruvate: step 1/1. Allosterically activated by fructose 1,6-bisphosphate (FBP). Catalyzes the conversion of lactate to pyruvate. The chain is L-lactate dehydrogenase 3 from Bacillus thuringiensis subsp. konkukian (strain 97-27).